The following is a 417-amino-acid chain: Serine hydroxymethyltransferase (417 aa).

(6S)-5,6,7,8-tetrahydrofolate contacts are provided by residues leucine 121 and 125–127 (GHL). Lysine 229 carries the N6-(pyridoxal phosphate)lysine modification. 355 to 357 (SPF) provides a ligand contact to (6S)-5,6,7,8-tetrahydrofolate.

It belongs to the SHMT family. Homodimer. It depends on pyridoxal 5'-phosphate as a cofactor.

It is found in the cytoplasm. The enzyme catalyses (6R)-5,10-methylene-5,6,7,8-tetrahydrofolate + glycine + H2O = (6S)-5,6,7,8-tetrahydrofolate + L-serine. It functions in the pathway one-carbon metabolism; tetrahydrofolate interconversion. The protein operates within amino-acid biosynthesis; glycine biosynthesis; glycine from L-serine: step 1/1. Its function is as follows. Catalyzes the reversible interconversion of serine and glycine with tetrahydrofolate (THF) serving as the one-carbon carrier. This reaction serves as the major source of one-carbon groups required for the biosynthesis of purines, thymidylate, methionine, and other important biomolecules. Also exhibits THF-independent aldolase activity toward beta-hydroxyamino acids, producing glycine and aldehydes, via a retro-aldol mechanism. The chain is Serine hydroxymethyltransferase from Xanthomonas euvesicatoria pv. vesicatoria (strain 85-10) (Xanthomonas campestris pv. vesicatoria).